The sequence spans 706 residues: Mitochondrial intermediate peptidase, mitochondrial (706 aa).

The N-terminal 29 residues, 1 to 29, are a transit peptide targeting the mitochondrion; it reads MWKLTRRLQPHINSTRWLVRNFRNGGAGD. A disordered region spans residues 212–238; that stretch reads NPTYRSTSGGSRGSTRSAHKSKQKGFR. Residues 214 to 227 show a composition bias toward low complexity; that stretch reads TYRSTSGGSRGSTR. Histidine 491 is a Zn(2+) binding site. Glutamate 492 is a catalytic residue. Histidine 495 and glutamate 520 together coordinate Zn(2+).

It belongs to the peptidase M3 family. Zn(2+) serves as cofactor.

Its subcellular location is the mitochondrion. Its function is as follows. Aminopeptidase which cleaves preproteins, imported into the mitochondrion, to their mature size. Could cleave both preproteins and preprotein intermediates already cleaved by the mitochondrial processing peptidase (MPP). This is Mitochondrial intermediate peptidase, mitochondrial from Arabidopsis thaliana (Mouse-ear cress).